The chain runs to 471 residues: ATP synthase subunit beta (471 aa).

158-165 (GGAGCGKT) contributes to the ATP binding site.

Belongs to the ATPase alpha/beta chains family. In terms of assembly, F-type ATPases have 2 components, CF(1) - the catalytic core - and CF(0) - the membrane proton channel. CF(1) has five subunits: alpha(3), beta(3), gamma(1), delta(1), epsilon(1). CF(0) has three main subunits: a(1), b(2) and c(9-12). The alpha and beta chains form an alternating ring which encloses part of the gamma chain. CF(1) is attached to CF(0) by a central stalk formed by the gamma and epsilon chains, while a peripheral stalk is formed by the delta and b chains.

It localises to the cell inner membrane. The enzyme catalyses ATP + H2O + 4 H(+)(in) = ADP + phosphate + 5 H(+)(out). Produces ATP from ADP in the presence of a proton gradient across the membrane. The catalytic sites are hosted primarily by the beta subunits. The sequence is that of ATP synthase subunit beta from Desulfotalea psychrophila (strain LSv54 / DSM 12343).